The following is a 403-amino-acid chain: Deubiquitinase and deneddylase Dub1 (403 aa).

Positions methionine 1–threonine 11 are enriched in polar residues. A disordered region spans residues methionine 1–leucine 24. Residues threonine 40–phenylalanine 60 form a helical membrane-spanning segment. Residues lysine 77 to proline 132 form a disordered region. Composition is skewed to pro residues over residues valine 86–threonine 105 and proline 114–proline 130. Residues histidine 277, aspartate 294, and cysteine 347 contribute to the active site.

The protein belongs to the peptidase C48 family.

The protein localises to the secreted. The protein resides in the host cell. It is found in the membrane. Effector proteins function to alter host cell physiology and promote bacterial survival in host tissues. This protease possesses deubiquitinating and deneddylating activities. In Chlamydia trachomatis serovar L2b (strain UCH-1/proctitis), this protein is Deubiquitinase and deneddylase Dub1 (cdu1).